Consider the following 115-residue polypeptide: Large ribosomal subunit protein bL20 (115 aa).

Belongs to the bacterial ribosomal protein bL20 family.

Functionally, binds directly to 23S ribosomal RNA and is necessary for the in vitro assembly process of the 50S ribosomal subunit. It is not involved in the protein synthesizing functions of that subunit. The polypeptide is Large ribosomal subunit protein bL20 (Chlorobium phaeobacteroides (strain BS1)).